Reading from the N-terminus, the 205-residue chain is Adenylyl-sulfate kinase (205 aa).

ATP is bound at residue 35–42; it reads GLSGAGKS. Ser109 acts as the Phosphoserine intermediate in catalysis.

The protein belongs to the APS kinase family.

It carries out the reaction adenosine 5'-phosphosulfate + ATP = 3'-phosphoadenylyl sulfate + ADP + H(+). The protein operates within sulfur metabolism; hydrogen sulfide biosynthesis; sulfite from sulfate: step 2/3. In terms of biological role, catalyzes the synthesis of activated sulfate. In Acaryochloris marina (strain MBIC 11017), this protein is Adenylyl-sulfate kinase.